Here is a 451-residue protein sequence, read N- to C-terminus: Probable D-serine dehydratase (451 aa).

The disordered stretch occupies residues 1 to 55 (MPGRTRPSCRLAITFTPRPDSATPRAGRAAPATGRRSNRSRSTLSATASPMPRRP). Positions 22 to 35 (ATPRAGRAAPATGR) are enriched in low complexity. K118 carries the post-translational modification N6-(pyridoxal phosphate)lysine.

It belongs to the serine/threonine dehydratase family. DsdA subfamily. Pyridoxal 5'-phosphate serves as cofactor.

It catalyses the reaction D-serine = pyruvate + NH4(+). The chain is Probable D-serine dehydratase from Paracidovorax citrulli (strain AAC00-1) (Acidovorax citrulli).